Consider the following 225-residue polypeptide: UPF0700 transmembrane protein RA0705 (225 aa).

The next 6 helical transmembrane spans lie at 17–37, 66–86, 95–115, 117–137, 168–188, and 194–214; these read VGLA…AIGL, GLLL…GVMI, ALLF…QPEL, FVSL…IEGL, IIQI…AVLV, and LALW…FQIP.

This sequence belongs to the UPF0700 family.

The protein localises to the cell membrane. The protein is UPF0700 transmembrane protein RA0705 of Rhizobium meliloti (strain 1021) (Ensifer meliloti).